Consider the following 87-residue polypeptide: MVNMKASMFLTFAGLVLLFVVCYASESEEKEFPKEMLSSIFAVDNDFKQEERDCAGYMRECKEKLRCSGYVCSSRWKWCVLPAPWRR.

The first 24 residues, Met1–Ala24, serve as a signal peptide directing secretion. A propeptide spanning residues Ser25–Arg52 is cleaved from the precursor. Cystine bridges form between Cys54-Cys67 and Cys61-Cys72.

Belongs to the neurotoxin 10 (Hwtx-1) family. 51 (Hntx-8) subfamily. Hntx-8 sub-subfamily. Expressed by the venom gland.

It is found in the secreted. Ion channel inhibitor. This Cyriopagopus hainanus (Chinese bird spider) protein is U3-theraphotoxin-Hhn1o.